The sequence spans 208 residues: Thymidylate kinase (208 aa).

Position 10–17 (10–17) interacts with ATP; that stretch reads GLEGAGKS.

The protein belongs to the thymidylate kinase family.

It catalyses the reaction dTMP + ATP = dTDP + ADP. Functionally, phosphorylation of dTMP to form dTDP in both de novo and salvage pathways of dTTP synthesis. The protein is Thymidylate kinase of Pseudoalteromonas translucida (strain TAC 125).